The following is a 130-amino-acid chain: Small ribosomal subunit protein eS6 (130 aa).

The interval 78-98 is disordered; sequence SGPPGFRPERKGERRRKTVRG.

This sequence belongs to the eukaryotic ribosomal protein eS6 family.

This Methanopyrus kandleri (strain AV19 / DSM 6324 / JCM 9639 / NBRC 100938) protein is Small ribosomal subunit protein eS6.